The sequence spans 484 residues: T-complex protein 1 subunit delta (484 aa).

Belongs to the TCP-1 chaperonin family. As to quaternary structure, component of the T-complex protein 1 (TCP1) complex.

It localises to the cytoplasm. In terms of biological role, molecular chaperone; assists the folding of proteins upon ATP hydrolysis. In Encephalitozoon cuniculi (strain GB-M1) (Microsporidian parasite), this protein is T-complex protein 1 subunit delta (CCT4).